Consider the following 189-residue polypeptide: Glycerol-3-phosphate acyltransferase (189 aa).

Transmembrane regions (helical) follow at residues 1–21 (MFWL…AIVL), 50–70 (KLAI…VLLA), 77–97 (LHAQ…PLYF), 111–131 (MLMA…LLTF), and 151–171 (LLAW…VMIV).

The protein belongs to the PlsY family. In terms of assembly, probably interacts with PlsX.

It is found in the cell inner membrane. The catalysed reaction is an acyl phosphate + sn-glycerol 3-phosphate = a 1-acyl-sn-glycero-3-phosphate + phosphate. Its pathway is lipid metabolism; phospholipid metabolism. Functionally, catalyzes the transfer of an acyl group from acyl-phosphate (acyl-PO(4)) to glycerol-3-phosphate (G3P) to form lysophosphatidic acid (LPA). This enzyme utilizes acyl-phosphate as fatty acyl donor, but not acyl-CoA or acyl-ACP. The protein is Glycerol-3-phosphate acyltransferase of Pseudomonas putida (strain ATCC 47054 / DSM 6125 / CFBP 8728 / NCIMB 11950 / KT2440).